The primary structure comprises 88 residues: Small ribosomal subunit protein bS20 (88 aa).

Positions 1 to 27 (MANSKSAKKRALQSEKRRQHNASRRSM) are disordered.

It belongs to the bacterial ribosomal protein bS20 family.

Binds directly to 16S ribosomal RNA. The polypeptide is Small ribosomal subunit protein bS20 (Shewanella loihica (strain ATCC BAA-1088 / PV-4)).